Reading from the N-terminus, the 452-residue chain is UDP-N-acetylmuramoyl-L-alanine--L-glutamate ligase (452 aa).

118-124 (GSKGKST) provides a ligand contact to ATP.

It belongs to the MurCDEF family. MurD2 subfamily.

The protein localises to the cytoplasm. It carries out the reaction UDP-N-acetyl-alpha-D-muramoyl-L-alanine + L-glutamate + ATP = UDP-N-acetyl-alpha-D-muramoyl-L-alanyl-L-glutamate + ADP + phosphate + H(+). It participates in cell wall biogenesis; peptidoglycan biosynthesis. In terms of biological role, cell wall formation. Catalyzes the addition of L-glutamate to the nucleotide precursor UDP-N-acetylmuramoyl-L-alanine. In Micromonospora sp. (strain ATCC 39149 / NRRL 15099 / SCC 1413), this protein is UDP-N-acetylmuramoyl-L-alanine--L-glutamate ligase.